Here is a 2360-residue protein sequence, read N- to C-terminus: MAAVLQQVLERPELNKLPKSTQNKLEKFLAEQQSEIDCLKGRHEKFKVESEQQYFEIEKRLSQSQERLVNETRECQNLRLELEKLNNQVKVLTEKNKELETAQDRNLGIQSQFTRAKEELEAEKRDLIRTNERLSQEVEYLTEDVKRLNEKLKESNTTKGELQLKLDELQASDVTVKYREKRLEQEKELLHNQNSWLNTELKTKTDELLALGREKGNEILELKCTLENKKEEVLRLEEQMNGLKTSNEHLQKHVEDLLTKLKEAKEQQASMEEKFHNELNAHIKLSNLYKSAADDSEAKSNELTRAVDELHKLLKEAGEANKTIQDHLLQVEESKDQMEKEMLEKIGKLEKELENANDLLSATKRKGAILSEEELAAMSPTAAAVAKIVKPGMKLTELYNAYVETQDQLLLEKLENKRINKYLDEIVKEVEAKAPILKRQREEYERAQKAVASLSAKLEQAMKEIQRLQEDTDKANKHSSVLERDNQRMEIQIKDLSQQIRVLLMELEEARGNHVIRDEEVSSADISSSSEVISQHLVSYRNIEELQQQNQRLLFALRELGETREREEQETTSSKIAELQNKLENSLTELEQLRESRQHQMQLVDSIVRQRDMYRILLSQTTGMAIPLQASSLDDISLVSTPKRSSTSQTVSTPAPEPIIESTETIEAKAALKQLQEIFENYKKEKMDSEKLQNEQLEKLQEQVTDLRSQNTKISTQLDFASKRYEMLQDNVEGYRREITSLQERNQKLTATTQKQEQIINTMTQDLRGANEKLAVAEVRAENLKKEKEMLKLSEVRLSQQRESLLAEQRGQNLLLTNLQTIQGILERSETETKQRLSSQIEKLEHEISHLKKKLENEVEQRHTLTRNLDVQLLDTKRQLDTEINLHLNTKELLKNAQKDIATLKQHLNNMEAQLASQSTQRTGKGQPGDRDDVDDLKSQLRQAEEQVNDLKERLKTSASNVEQYRAMVTSLEDSLNKEKQVTEEVHKNIEVRLKESAEFQTQLEKKLMEVEKEKQELQDDKRKAIESMEQQLTELKKTLSSVQSEVQEALQRASTALSNEQQARRDCQEQAKIAVEAQNKYERELMLHAADVEALQAAKEQVSKMASVRQHLEETTQKAESQLLECKASWEERERVLKDEVSKSVSRCEDLEKQNRLLHDQIEKLSDKVVTSMKEVVQSPLNISLNEEGKSQEQILEILRFIRREKEIAETRFEVAQVESLRYRQRVELLERELQELQDSLNAEREKVQVTAKTMAQHEELMKKTETMNVVMETNKMLREEKERLEQNLQQMQAKVRKLELDILPLQEANAELSEKSGMLQAEKKLLEEDVKRWKARNQHLINQQKDPDTEEYRKLLSEKEIHTKRIQQLNEEVGRLKAEIARSNASLTNNQNLIQSLKEDLSKVRTEKESIQKDLDAKIIDIQEKVKTITQVKKIGRRYKTQFEELKAQQKAMETSTQSSGDHQEQHISVQEMQELKDNLSQSETKTKSLEGQVENLQKTLSEKETEARSLQEQTAQLQSELSRLRQELQDKTTKEEQLRQQMNEKDEKTWKAITVARSKIAHLSGVKDQLTKENEELKQRNGALDQQKDELDVRMTALKSQYEGRISRLERELREHQERHLEQRDEPQEPTNKAPEQQRQITLKTTPASGERGIASTSDPPTANIKPTPVVSTPSKVTAAAMAGNKSTPRASIRPMVTPATVTNPTTTPTATVMPTTQVESQEAMQSEGPVEHVPVFGSTSGSVRSTSPNVQPSISQPLLTVQQQTQATAFVQPTQQSHPQIEPANQELSPNIVEVVQSSPVERPSTSTAVFGTVSATPSSSLPKRAREEEEDSTIEAGDQVSDDTVEMPLPKKLKTVTPVGTEEEVMAEESTDGEAETQTYNQDSQDSIGEGVTQGDYTPMEDSEETSQSLQIDLGPLQSDQQTTSSQDGQGKGDDVIVIDSDDEDDDEENDGEHEDYEEDEDEDDDEEDDTGMGDEGEDSNEGTGSADGNDGYEADDAEGGDGTDPGTETEESMGGAESNQRAADSQNSGEGNTSAAESSFSQEVAREQQPTSASERQTPQAPQSPRRPPHPLPPRLTIHAPPQELGPPVQRIQMTRRQSVGRGLQLTPGIGGMQQHFFDDEDRTVPSTPTLVVPHRTDGFAEAIHSPQVAGVPRFRFGPPEDMPQTSSSHSDLGQLASQGGLGMYETPLFLAHEEESGGRSVPTTPLQVAAPVTVFTESTTSDASEHASQSVPMVTTSTGTLSTTNETPAGDDGDEVFVETESEGISSEAGLEIDSQQEEEPVQASDESDLPSTSQDPPSSSSVDTSSSQPKPFRRVRLQTTLRQGVRGRQFNRQRGISHAMGGRGGINRGNIN.

The residue at position 2 (A2) is an N-acetylalanine. The tract at residues 3–13 is sufficient for interaction with TPR; that stretch reads AVLQQVLERPE. Positions 14–117 are necessary for interaction with HSF1; that stretch reads LNKLPKSTQN…GIQSQFTRAK (104 aa). Residues 24-370 are a coiled coil; sequence KLEKFLAEQQ…SATKRKGAIL (347 aa). K252, K312, and K345 each carry N6-acetyllysine. S379 carries the post-translational modification Phosphoserine. A coiled-coil region spans residues 423–603; the sequence is LDEIVKEVEA…RESRQHQMQL (181 aa). K428, K457, and K477 each carry N6-acetyllysine. The necessary for association to the NPC stretch occupies residues 437-513; the sequence is LKRQREEYER…LMELEEARGN (77 aa). S522, S523, and S632 each carry phosphoserine. The stretch at 664–1172 forms a coiled coil; sequence ETIEAKAALK…IEKLSDKVVT (509 aa). 4 positions are modified to N6-acetyllysine: K713, K723, K748, and K755. The span at 915–924 shows a compositional bias: polar residues; sequence LASQSTQRTG. The disordered stretch occupies residues 915–939; that stretch reads LASQSTQRTGKGQPGDRDDVDDLKS. A compositionally biased stretch (basic and acidic residues) spans 928 to 939; the sequence is PGDRDDVDDLKS. 2 positions are modified to phosphoserine: S1180 and S1185. Coiled coils occupy residues 1215–1420 and 1472–1629; these read EVAQ…LDAK and VQEM…QRDE. Residues 1218–1320 form a necessary for interaction with HSF1 region; it reads QVESLRYRQR…NAELSEKSGM (103 aa). Disordered stretches follow at residues 1479 to 1520 and 1618 to 1673; these read KDNL…TAQL and EHQE…PTPV. Basic and acidic residues-rich tracts occupy residues 1503 to 1512 and 1618 to 1630; these read LSEKETEARS and EHQE…RDEP. A compositionally biased stretch (polar residues) spans 1632-1651; that stretch reads EPTNKAPEQQRQITLKTTPA. K1689 is modified (N6-acetyllysine). T1691 is modified (phosphothreonine). Residues 1801 to 1826 are compositionally biased toward polar residues; it reads QSSPVERPSTSTAVFGTVSATPSSSL. The interval 1801 to 2122 is disordered; it reads QSSPVERPST…TPGIGGMQQH (322 aa). Residues 1811–1866 are sufficient and essential for mediating its nuclear import; sequence STAVFGTVSATPSSSLPKRAREEEEDSTIEAGDQVSDDTVEMPLPKKLKTVTPVGT. Positions 1866-1880 are enriched in acidic residues; it reads TEEEVMAEESTDGEA. Residues 1881 to 1892 are compositionally biased toward polar residues; sequence ETQTYNQDSQDS. Position 1892 is a phosphoserine (S1892). The segment covering 1923–1934 has biased composition (low complexity); that stretch reads QSDQQTTSSQDG. Composition is skewed to acidic residues over residues 1945–1986 and 1996–2017; these read DSDD…EDSN and DGYE…ETEE. Over residues 2023–2061 the composition is skewed to polar residues; that stretch reads ESNQRAADSQNSGEGNTSAAESSFSQEVAREQQPTSASE. A phosphoserine mark is found at S2031, S2034, S2045, S2047, and S2070. Omega-N-methylarginine occurs at positions 2103 and 2108. Residues T2113 and T2134 each carry the phosphothreonine modification. A Phosphoserine modification is found at S2152. R2160 carries the post-translational modification Omega-N-methylarginine. A compositionally biased stretch (polar residues) spans 2224–2241; it reads ESTTSDASEHASQSVPMV. Residues 2224 to 2360 form a disordered region; it reads ESTTSDASEH…RGGINRGNIN (137 aa). A compositionally biased stretch (low complexity) spans 2242-2254; sequence TTSTGTLSTTNET. Composition is skewed to acidic residues over residues 2256 to 2269 and 2282 to 2296; these read AGDD…ETES and SQQE…DESD. A compositionally biased stretch (low complexity) spans 2297 to 2317; the sequence is LPSTSQDPPSSSSVDTSSSQP. Asymmetric dimethylarginine occurs at positions 2340, 2342, and 2351. Over residues 2349-2360 the composition is skewed to gly residues; it reads GGRGGINRGNIN.

It belongs to the TPR family. As to quaternary structure, homodimer. Part of the nuclear pore complex (NPC). Associates with the XPO1/CRM1-mediated nuclear export complex, the Importin alpha/Importin beta receptor and the dynein 1 complex. Interacts (via C-terminal domain) with the KPNB1; the interaction occurs in a RanGTP-dependent manner. Interacts (via C-terminal region and phosphorylated form) with MAPK1/ERK2 (via phosphorylated form); the interaction requires dimerization of MAPK1/ERK2 and increases following EGF stimulation. Interacts with MAPK3/ERK1; the interaction increases following EGF stimulation. Interacts (via coiled coil region) with NUP153; the interaction is direct. Interacts with HSF1; the interaction increases in a stress-responsive manner and stimulates export of stress-induced HSP70 mRNA. Interacts with huntingtin/HTT; the interaction is inhibited by aggregated huntingtin/HTT forms with expanded polyglutamine stretch. Interacts with MAD1L1 (via N-terminal region), MAD2L1, and TTK; the interactions occurs in a microtubule-independent manner. Interacts (via middle region) with DYNLL1. Interacts with DCTN1, dynein, NUP153 and tubulin. Interacts with IFI204 (via C-terminal region). Interacts with IFI203. Interacts with MTA1. Interacts with ZC3HC1; this interaction mediates ZC3HC1 nuclear envelopes (NE)-association but also required for proper positioning of a substantial amount of TPR at the nuclear basket (NB). Phosphorylated. Phosphorylation occurs on serine and threonine residues (comprised in the C-terminal region) by MAPK1/ERK2 and stabilizes the interaction between these two proteins.

The protein resides in the nucleus. The protein localises to the nucleus membrane. It is found in the nucleus envelope. It localises to the nuclear pore complex. Its subcellular location is the cytoplasm. The protein resides in the cytoskeleton. The protein localises to the spindle. It is found in the chromosome. It localises to the centromere. Its subcellular location is the kinetochore. Its function is as follows. Component of the nuclear pore complex (NPC), a complex required for the trafficking across the nuclear envelope. Functions as a scaffolding element in the nuclear phase of the NPC essential for normal nucleocytoplasmic transport of proteins and mRNAs, plays a role in the establishment of nuclear-peripheral chromatin compartmentalization in interphase, and in the mitotic spindle checkpoint signaling during mitosis. Involved in the quality control and retention of unspliced mRNAs in the nucleus; in association with NUP153, regulates the nuclear export of unspliced mRNA species bearing constitutive transport element (CTE) in a NXF1- and KHDRBS1-independent manner. Negatively regulates both the association of CTE-containing mRNA with large polyribosomes and translation initiation. Does not play any role in Rev response element (RRE)-mediated export of unspliced mRNAs. Implicated in nuclear export of mRNAs transcribed from heat shock gene promoters; associates both with chromatin in the HSP70 promoter and with mRNAs transcribed from this promoter under stress-induced conditions. Modulates the nucleocytoplasmic transport of activated MAPK1/ERK2 and huntingtin/HTT and may serve as a docking site for the XPO1/CRM1-mediated nuclear export complex. Also plays a role as a structural and functional element of the perinuclear chromatin distribution; involved in the formation and/or maintenance of NPC-associated perinuclear heterochromatin exclusion zones (HEZs). Finally, acts as a spatial regulator of the spindle-assembly checkpoint (SAC) response ensuring a timely and effective recruitment of spindle checkpoint proteins like MAD1L1 and MAD2L1 to unattached kinetochore during the metaphase-anaphase transition before chromosome congression. Its N-terminus is involved in activation of oncogenic kinases. Plays a role in the regulation of nuclear protein export. In Rattus norvegicus (Rat), this protein is Nucleoprotein TPR.